A 120-amino-acid polypeptide reads, in one-letter code: Large ribosomal subunit protein uL18 (120 aa).

Belongs to the universal ribosomal protein uL18 family. As to quaternary structure, part of the 50S ribosomal subunit; part of the 5S rRNA/L5/L18/L25 subcomplex. Contacts the 5S and 23S rRNAs.

Functionally, this is one of the proteins that bind and probably mediate the attachment of the 5S RNA into the large ribosomal subunit, where it forms part of the central protuberance. In Methylobacterium nodulans (strain LMG 21967 / CNCM I-2342 / ORS 2060), this protein is Large ribosomal subunit protein uL18.